A 208-amino-acid chain; its full sequence is Small ribosomal subunit protein uS4 (208 aa).

Positions 95-157 (RRIDNIVYRA…DSLKKLVRSN (63 aa)) constitute an S4 RNA-binding domain.

It belongs to the universal ribosomal protein uS4 family. Part of the 30S ribosomal subunit. Contacts protein S5. The interaction surface between S4 and S5 is involved in control of translational fidelity.

Its function is as follows. One of the primary rRNA binding proteins, it binds directly to 16S rRNA where it nucleates assembly of the body of the 30S subunit. In terms of biological role, with S5 and S12 plays an important role in translational accuracy. The sequence is that of Small ribosomal subunit protein uS4 from Borrelia duttonii (strain Ly).